A 596-amino-acid polypeptide reads, in one-letter code: ATP-dependent lipid A-core flippase (596 aa).

The next 6 membrane-spanning stretches (helical) occupy residues 34-54 (VWVL…EAGI), 80-100 (AAVV…GYLL), 138-158 (AVVF…ITLV), 164-184 (VVFL…IVAI), 263-283 (QPLT…IAVV), and 292-312 (VGGF…LKHL). The 284-residue stretch at 38–321 (VAGVLAMAAV…LMDVNQPLQR (284 aa)) folds into the ABC transmembrane type-1 domain. Residues 353–589 (IEFSHVSFSY…GGLYAHLHRI (237 aa)) form the ABC transporter domain. 389–396 (GPSGSGKT) lines the ATP pocket.

Belongs to the ABC transporter superfamily. Lipid exporter (TC 3.A.1.106) family. In terms of assembly, homodimer.

It localises to the cell inner membrane. It carries out the reaction ATP + H2O + lipid A-core oligosaccharideSide 1 = ADP + phosphate + lipid A-core oligosaccharideSide 2.. Functionally, involved in lipopolysaccharide (LPS) biosynthesis. Translocates lipid A-core from the inner to the outer leaflet of the inner membrane. Transmembrane domains (TMD) form a pore in the inner membrane and the ATP-binding domain (NBD) is responsible for energy generation. In Burkholderia thailandensis (strain ATCC 700388 / DSM 13276 / CCUG 48851 / CIP 106301 / E264), this protein is ATP-dependent lipid A-core flippase.